We begin with the raw amino-acid sequence, 96 residues long: uncharacterized protein (96 aa).

Residues 35–96 (SPSGEKRSTK…KKFSSPPHPK (62 aa)) form a disordered region. Basic and acidic residues predominate over residues 38–52 (GEKRSTKNQTKENTK). Positions 69–80 (ANQQTNENSKPL) are enriched in polar residues.

This is an uncharacterized protein from Dictyostelium discoideum (Social amoeba).